Here is a 246-residue protein sequence, read N- to C-terminus: Carboxylesterase (246 aa).

The active-site Nucleophile is the Ser-93. Residues Asp-192 and His-222 each act as charge relay system in the active site.

Belongs to the lipase/esterase LIP3/BchO family. Homodimer.

It catalyses the reaction a carboxylic ester + H2O = an alcohol + a carboxylate + H(+). In terms of biological role, involved in the detoxification of xenobiotics. Shows maximal activity with C6 substrates, with gradually decreasing activity from C8 to C12 substrates. No activity for higher chain length substrates acids rather than long-chain ones. The protein is Carboxylesterase (est) of Geobacillus stearothermophilus (Bacillus stearothermophilus).